We begin with the raw amino-acid sequence, 176 residues long: Large ribosomal subunit protein uL6 (176 aa).

Residues 151–169 show a composition bias toward basic and acidic residues; that stretch reads RPPEPYKGRGIKYTDEHIQ. Residues 151 to 176 form a disordered region; the sequence is RPPEPYKGRGIKYTDEHIQRKAGKTK.

The protein belongs to the universal ribosomal protein uL6 family. As to quaternary structure, part of the 50S ribosomal subunit.

This protein binds to the 23S rRNA, and is important in its secondary structure. It is located near the subunit interface in the base of the L7/L12 stalk, and near the tRNA binding site of the peptidyltransferase center. This Desulfosudis oleivorans (strain DSM 6200 / JCM 39069 / Hxd3) (Desulfococcus oleovorans) protein is Large ribosomal subunit protein uL6.